Consider the following 401-residue polypeptide: Phosphoglycerate kinase (401 aa).

Substrate-binding positions include 21–23, Arg-36, 59–62, Arg-119, and Arg-160; these read DFN and HLGR. ATP contacts are provided by residues Lys-212, Glu-330, and 357 to 360; that span reads GGDS.

It belongs to the phosphoglycerate kinase family. In terms of assembly, monomer.

It is found in the cytoplasm. The enzyme catalyses (2R)-3-phosphoglycerate + ATP = (2R)-3-phospho-glyceroyl phosphate + ADP. It participates in carbohydrate degradation; glycolysis; pyruvate from D-glyceraldehyde 3-phosphate: step 2/5. This Limosilactobacillus fermentum (strain NBRC 3956 / LMG 18251) (Lactobacillus fermentum) protein is Phosphoglycerate kinase.